The following is a 62-amino-acid chain: Andropin (62 aa).

A signal peptide spans 1 to 22 (MKYFSVLVVLTLILAIVDQSDA).

It belongs to the andropin family. Ejaculatory duct of adult males.

It localises to the secreted. In terms of biological role, male-specific peptide with moderate activity against Gram-positive bacteria. The sequence is that of Andropin (Anp) from Drosophila teissieri (Fruit fly).